A 337-amino-acid polypeptide reads, in one-letter code: ATP-dependent 6-phosphofructokinase (337 aa).

Glycine 11 contacts ATP. Residue 21-25 (RAVVR) coordinates ADP. ATP-binding positions include 72 to 73 (RY) and 102 to 105 (GDGS). Aspartate 103 contributes to the Mg(2+) binding site. 125–127 (TID) lines the substrate pocket. Aspartate 127 acts as the Proton acceptor in catalysis. Arginine 154 serves as a coordination point for ADP. Substrate contacts are provided by residues arginine 162 and 169 to 171 (MGR). ADP-binding positions include 185 to 187 (GAD), lysine 212, and 214 to 216 (KNH). Substrate contacts are provided by residues glutamate 223, arginine 245, and 251–254 (HILR).

This sequence belongs to the phosphofructokinase type A (PFKA) family. ATP-dependent PFK group I subfamily. Prokaryotic clade 'B1' sub-subfamily. As to quaternary structure, homotetramer. The cofactor is Mg(2+).

The protein localises to the cytoplasm. It carries out the reaction beta-D-fructose 6-phosphate + ATP = beta-D-fructose 1,6-bisphosphate + ADP + H(+). It participates in carbohydrate degradation; glycolysis; D-glyceraldehyde 3-phosphate and glycerone phosphate from D-glucose: step 3/4. With respect to regulation, allosterically activated by ADP and other diphosphonucleosides, and allosterically inhibited by phosphoenolpyruvate. In terms of biological role, catalyzes the phosphorylation of D-fructose 6-phosphate to fructose 1,6-bisphosphate by ATP, the first committing step of glycolysis. The sequence is that of ATP-dependent 6-phosphofructokinase from Streptococcus pyogenes serotype M1.